We begin with the raw amino-acid sequence, 601 residues long: Probable HECT-type ubiquitin ligase-interacting protein creD (601 aa).

Disordered regions lie at residues 374–397 (EVDP…GTLS) and 455–489 (SADY…DHDH). The segment covering 461 to 473 (PSSGSNSHSPASP) has biased composition (low complexity). The segment covering 475-489 (LSRRPSDEGYHDHDH) has biased composition (basic and acidic residues).

This sequence belongs to the arrestin family. As to quaternary structure, interacts with hulA.

Component of the regulatory network controlling carbon source utilization through ubiquitination and deubiquitination involving creA, creB, creC, creD and acrB. May be involved in signaling by recognizing appropriately phosphorylated substrates via its arrestin domains and then recruit a HECT-type ubiquitin ligase such as hulA, leading to ubiquitination of the substrate, providing a link between ubiquitination and phosphorylation in protein regulation and stability. This chain is Probable HECT-type ubiquitin ligase-interacting protein creD (creD), found in Neosartorya fischeri (strain ATCC 1020 / DSM 3700 / CBS 544.65 / FGSC A1164 / JCM 1740 / NRRL 181 / WB 181) (Aspergillus fischerianus).